A 360-amino-acid chain; its full sequence is Vitopine synthase (360 aa).

The protein belongs to the lysopine/nopaline/octopine/opine/vitopine dehydrogenases family.

The chain is Vitopine synthase (vis) from Allorhizobium ampelinum (strain ATCC BAA-846 / DSM 112012 / S4) (Agrobacterium vitis (strain S4)).